The primary structure comprises 84 residues: Large ribosomal subunit protein bL31B (84 aa).

The protein belongs to the bacterial ribosomal protein bL31 family. Type B subfamily. In terms of assembly, part of the 50S ribosomal subunit.

In Rhodococcus erythropolis (strain PR4 / NBRC 100887), this protein is Large ribosomal subunit protein bL31B.